The primary structure comprises 277 residues: Putative pyruvate, phosphate dikinase regulatory protein (277 aa).

151–158 (GISRTSKT) contacts ADP.

Belongs to the pyruvate, phosphate/water dikinase regulatory protein family. PDRP subfamily.

The enzyme catalyses N(tele)-phospho-L-histidyl/L-threonyl-[pyruvate, phosphate dikinase] + ADP = N(tele)-phospho-L-histidyl/O-phospho-L-threonyl-[pyruvate, phosphate dikinase] + AMP + H(+). It carries out the reaction N(tele)-phospho-L-histidyl/O-phospho-L-threonyl-[pyruvate, phosphate dikinase] + phosphate + H(+) = N(tele)-phospho-L-histidyl/L-threonyl-[pyruvate, phosphate dikinase] + diphosphate. Functionally, bifunctional serine/threonine kinase and phosphorylase involved in the regulation of the pyruvate, phosphate dikinase (PPDK) by catalyzing its phosphorylation/dephosphorylation. The sequence is that of Putative pyruvate, phosphate dikinase regulatory protein from Alkaliphilus oremlandii (strain OhILAs) (Clostridium oremlandii (strain OhILAs)).